Here is a 238-residue protein sequence, read N- to C-terminus: uncharacterized protein (238 aa).

The protein belongs to the mimivirus L74/L77/R857 family.

This is an uncharacterized protein from Acanthamoeba polyphaga mimivirus (APMV).